A 284-amino-acid polypeptide reads, in one-letter code: MTAQIIDGKAIAQTIRTQLKDKVTARKEAGQRAPGLAVILVGADPASQVYVGSKRRACEEVGFISRSYDLDSSTSEEALLSLIDECNEDPSIDGILVQLPLPEHIEESKVIERIRPDKDVDGFHPYNVGRLAQRIPVLRACTPMGIMTLIKSTGVDTFGLDAVVIGASNIVGRPMALELLLTGCTTTICHRFTRNLEDKVRQADLLVVAVGKPGFIPGDWIKPGAIVIDVGINRLEGGQLVGDVQFDDAAQHASFITPVPGGVGPMTIASLLENTLYACEQYHD.

Residues 166-168 (GAS) and Ile232 contribute to the NADP(+) site.

The protein belongs to the tetrahydrofolate dehydrogenase/cyclohydrolase family. In terms of assembly, homodimer.

The catalysed reaction is (6R)-5,10-methylene-5,6,7,8-tetrahydrofolate + NADP(+) = (6R)-5,10-methenyltetrahydrofolate + NADPH. It catalyses the reaction (6R)-5,10-methenyltetrahydrofolate + H2O = (6R)-10-formyltetrahydrofolate + H(+). It functions in the pathway one-carbon metabolism; tetrahydrofolate interconversion. Catalyzes the oxidation of 5,10-methylenetetrahydrofolate to 5,10-methenyltetrahydrofolate and then the hydrolysis of 5,10-methenyltetrahydrofolate to 10-formyltetrahydrofolate. The protein is Bifunctional protein FolD of Shewanella halifaxensis (strain HAW-EB4).